A 523-amino-acid chain; its full sequence is Peptide chain release factor 3 (523 aa).

A tr-type G domain is found at 8–275 (KKRRTFAIIS…TFLEYAPEPH (268 aa)). GTP-binding positions include 17–24 (SHPDAGKT), 85–89 (DTPGH), and 139–142 (NKLD).

It belongs to the TRAFAC class translation factor GTPase superfamily. Classic translation factor GTPase family. PrfC subfamily.

The protein resides in the cytoplasm. Increases the formation of ribosomal termination complexes and stimulates activities of RF-1 and RF-2. It binds guanine nucleotides and has strong preference for UGA stop codons. It may interact directly with the ribosome. The stimulation of RF-1 and RF-2 is significantly reduced by GTP and GDP, but not by GMP. In Lactococcus lactis subsp. lactis (strain IL1403) (Streptococcus lactis), this protein is Peptide chain release factor 3 (prfC).